We begin with the raw amino-acid sequence, 145 residues long: D-aminoacyl-tRNA deacylase (145 aa).

The Gly-cisPro motif, important for rejection of L-amino acids motif lies at 137–138 (GP).

It belongs to the DTD family. In terms of assembly, homodimer.

It localises to the cytoplasm. The enzyme catalyses glycyl-tRNA(Ala) + H2O = tRNA(Ala) + glycine + H(+). The catalysed reaction is a D-aminoacyl-tRNA + H2O = a tRNA + a D-alpha-amino acid + H(+). Functionally, an aminoacyl-tRNA editing enzyme that deacylates mischarged D-aminoacyl-tRNAs. Also deacylates mischarged glycyl-tRNA(Ala), protecting cells against glycine mischarging by AlaRS. Acts via tRNA-based rather than protein-based catalysis; rejects L-amino acids rather than detecting D-amino acids in the active site. By recycling D-aminoacyl-tRNA to D-amino acids and free tRNA molecules, this enzyme counteracts the toxicity associated with the formation of D-aminoacyl-tRNA entities in vivo and helps enforce protein L-homochirality. In Pectobacterium atrosepticum (strain SCRI 1043 / ATCC BAA-672) (Erwinia carotovora subsp. atroseptica), this protein is D-aminoacyl-tRNA deacylase.